A 107-amino-acid chain; its full sequence is Putative double-stranded DNA mimic protein PC1_1990 (107 aa).

It belongs to the putative dsDNA mimic protein family.

Its function is as follows. May act as a double-stranded DNA (dsDNA) mimic. Probably regulates the activity of a dsDNA-binding protein. This chain is Putative double-stranded DNA mimic protein PC1_1990, found in Pectobacterium carotovorum subsp. carotovorum (strain PC1).